The sequence spans 703 residues: Polyribonucleotide nucleotidyltransferase (703 aa).

Residues D485 and D491 each contribute to the Mg(2+) site. In terms of domain architecture, KH spans 552-611 (PRIYTLKIDQDKIRDVIGKGGAMIRSITEASDTNIEIEDDGTIKIFATERAKADIAISKI). Residues 621 to 689 (GKTYEGKVTR…RQNRVRLSIK (69 aa)) enclose the S1 motif domain.

This sequence belongs to the polyribonucleotide nucleotidyltransferase family. Component of the RNA degradosome, which is a multiprotein complex involved in RNA processing and mRNA degradation. The cofactor is Mg(2+).

Its subcellular location is the cytoplasm. It carries out the reaction RNA(n+1) + phosphate = RNA(n) + a ribonucleoside 5'-diphosphate. Involved in mRNA degradation. Catalyzes the phosphorolysis of single-stranded polyribonucleotides processively in the 3'- to 5'-direction. The polypeptide is Polyribonucleotide nucleotidyltransferase (Pseudoalteromonas atlantica (strain T6c / ATCC BAA-1087)).